The following is an 88-amino-acid chain: UPF0473 protein CLL_A1177 (88 aa).

This sequence belongs to the UPF0473 family.

This chain is UPF0473 protein CLL_A1177, found in Clostridium botulinum (strain Eklund 17B / Type B).